The following is a 2351-amino-acid chain: Coagulation factor VIII (2351 aa).

A signal peptide spans 1–19 (MQIELSTCFFLCLLRFCFS). 2 consecutive Plastocyanin-like domains span residues 20–198 (ATRR…LLVC) and 206–348 (EKTQ…VDSC). Positions 20–348 (ATRRYYLGAV…MEAYVKVDSC (329 aa)) constitute an F5/8 type A 1 domain. A glycan (N-linked (GlcNAc...) asparagine) is linked at Asn60. An intrachain disulfide couples Cys172 to Cys198. N-linked (GlcNAc...) asparagine glycosylation is present at Asn258. An intrachain disulfide couples Cys267 to Cys348. At Tyr365 the chain carries Sulfotyrosine. Plastocyanin-like domains are found at residues 399–573 (KTWV…LLIC) and 583–730 (NQIM…VSSC). In terms of domain architecture, F5/8 type A 2 spans 399-730 (KTWVHYIAAE…MTALLKVSSC (332 aa)). Cys547 and Cys573 are oxidised to a cystine. Residue Asn601 is glycosylated (N-linked (GlcNAc...) asparagine). Cys649 and Cys730 are disulfide-bonded. Sulfotyrosine occurs at positions 737, 738, and 742. A b region spans residues 760–1667 (SFSQNSRHPS…NPPVLKRHQR (908 aa)). Residues Asn776, Asn803, Asn847, and Asn919 are each glycosylated (N-linked (GlcNAc...) asparagine). Disordered stretches follow at residues 906–928 (STIP…PPSM) and 941–961 (FGKK…SEEN). Asn962, Asn982, Asn1020, Asn1024, Asn1074, Asn1085, Asn1204, Asn1274, Asn1278, Asn1301, Asn1319, Asn1431, and Asn1461 each carry an N-linked (GlcNAc...) asparagine glycan. Tyr1683 and Tyr1699 each carry sulfotyrosine. Plastocyanin-like domains are found at residues 1713 to 1877 (KTRH…LLVC) and 1887 to 2040 (GRQV…SNKC). An F5/8 type A 3 domain is found at 1713–2040 (KTRHYFIAAV…TLFLVYSNKC (328 aa)). Asn1829 is a glycosylation site (N-linked (GlcNAc...) asparagine). 4 disulfide bridges follow: Cys1851–Cys1877, Cys1918–Cys1922, Cys2040–Cys2188, and Cys2193–Cys2345. F5/8 type C domains follow at residues 2040–2188 (CQTP…LMGC) and 2193–2345 (CSMP…VLGC). Asn2137 carries N-linked (GlcNAc...) asparagine glycosylation.

It belongs to the multicopper oxidase family. Interacts with VWF/vWF. vWF binding is essential for the stabilization of F8 in circulation. Sulfation on Tyr-1699 is essential for binding vWF. Post-translationally, proteolytically cleaved by cathepsin CTSG to produce a partially activated form.

Its subcellular location is the secreted. It localises to the extracellular space. Factor VIII, along with calcium and phospholipid, acts as a cofactor for F9/factor IXa when it converts F10/factor X to the activated form, factor Xa. This Homo sapiens (Human) protein is Coagulation factor VIII (F8).